The primary structure comprises 136 residues: Transcription antitermination protein NusB (136 aa).

The protein belongs to the NusB family.

Functionally, involved in transcription antitermination. Required for transcription of ribosomal RNA (rRNA) genes. Binds specifically to the boxA antiterminator sequence of the ribosomal RNA (rrn) operons. The chain is Transcription antitermination protein NusB from Paenarthrobacter aurescens (strain TC1).